The sequence spans 576 residues: MNSQAWIQLAVFLALLMLLAWPLGRWLAAVAEGHLPQGLAPFCRVETALYRAAGIDAAVGMGWKAYALALLAFNALGALAVYALQRLQGGLPLNPQGLPGVGADSSLNTAVSFVSNTNWQGYAGETTMSYLTQMLALGVQNFLSAATGIAVAFALIRGFAARSSSAIGNFWVDVTRITVYVLLPLSLVFAVFLVSQGVIQNVQPYQDVSTLEGAASTPQTLAMGPVASQEAIKMIGTNGGGFFNANSAHPYENPTPLSNFAQMLAIFLIPAGLVFAFGRLVGDVRQGGALLAAMTVMFVLAVVTVTSLEQRGHPQLAALGVDPVASALQAGGNMEGKEARFGIAASALFAAITTAASCGAVNAMHDSFMPLGGAVPLLLIQLGEVVFGGVGSGLYGMLVFAILAVFIAGLMIGRTPEYLGKKIEPYEMKMTAVVILVTPLLALLGTAVALTAPTGPAGMGNPGPHGYTEILYALSSAANNNGSAFAGLSANTPFYNLLLAVAMWFGRFGVIVPVLAIAGSLAAKKRLPVTAGTLPTHGPLFVVLLIGAVLLVGLLNYVPALALGPVVEHLMQAAAR.

12 helical membrane passes run 4 to 24, 65 to 85, 136 to 156, 179 to 199, 257 to 277, 288 to 308, 341 to 361, 371 to 391, 393 to 413, 430 to 450, 497 to 517, and 540 to 560; these read QAWIQLAVFLALLMLLAWPLG, AYALALLAFNALGALAVYALQ, ALGVQNFLSAATGIAVAFALI, VYVLLPLSLVFAVFLVSQGVI, LSNFAQMLAIFLIPAGLVFAF, GALLAAMTVMFVLAVVTVTSL, FGIAASALFAAITTAASCGAV, LGGAVPLLLIQLGEVVFGGVG, GLYGMLVFAILAVFIAGLMIG, MTAVVILVTPLLALLGTAVAL, LLLAVAMWFGRFGVIVPVLAI, and LFVVLLIGAVLLVGLLNYVPA.

It belongs to the KdpA family. The system is composed of three essential subunits: KdpA, KdpB and KdpC.

Its subcellular location is the cell inner membrane. Part of the high-affinity ATP-driven potassium transport (or Kdp) system, which catalyzes the hydrolysis of ATP coupled with the electrogenic transport of potassium into the cytoplasm. This subunit binds the periplasmic potassium ions and delivers the ions to the membrane domain of KdpB through an intramembrane tunnel. This is Potassium-transporting ATPase potassium-binding subunit from Methylibium petroleiphilum (strain ATCC BAA-1232 / LMG 22953 / PM1).